We begin with the raw amino-acid sequence, 484 residues long: Cysteine--tRNA ligase (484 aa).

Zn(2+) is bound at residue cysteine 29. Residues 31–41 (PTVQSAPHIGH) carry the 'HIGH' region motif. Zn(2+)-binding residues include cysteine 219, histidine 244, and glutamate 248. Residues 275 to 279 (KMSKS) carry the 'KMSKS' region motif. Lysine 278 lines the ATP pocket.

The protein belongs to the class-I aminoacyl-tRNA synthetase family. Monomer. It depends on Zn(2+) as a cofactor.

It is found in the cytoplasm. The enzyme catalyses tRNA(Cys) + L-cysteine + ATP = L-cysteinyl-tRNA(Cys) + AMP + diphosphate. The polypeptide is Cysteine--tRNA ligase (Clavibacter sepedonicus (Clavibacter michiganensis subsp. sepedonicus)).